Here is a 274-residue protein sequence, read N- to C-terminus: Large ribosomal subunit protein uL2 (274 aa).

Disordered stretches follow at residues 28 to 55 (APHA…RHVG) and 224 to 274 (VAMN…RRRK). Positions 263 to 274 (KRTDKMIVRRRK) are enriched in basic and acidic residues.

It belongs to the universal ribosomal protein uL2 family. Part of the 50S ribosomal subunit. Forms a bridge to the 30S subunit in the 70S ribosome.

Functionally, one of the primary rRNA binding proteins. Required for association of the 30S and 50S subunits to form the 70S ribosome, for tRNA binding and peptide bond formation. It has been suggested to have peptidyltransferase activity; this is somewhat controversial. Makes several contacts with the 16S rRNA in the 70S ribosome. The protein is Large ribosomal subunit protein uL2 of Pseudomonas fluorescens (strain ATCC BAA-477 / NRRL B-23932 / Pf-5).